Reading from the N-terminus, the 473-residue chain is Photosystem II CP43 reaction center protein (473 aa).

The propeptide occupies 1–14 (MKTLYSLRRFYHVE). Residue Thr15 is modified to N-acetylthreonine. Phosphothreonine is present on Thr15. 5 helical membrane passes run 69 to 93 (LFEV…PHLA), 134 to 155 (LLGP…KDRN), 178 to 200 (KALY…RKIT), 255 to 275 (KPFA…LSYS), and 291 to 312 (WFNN…ASQA). A [CaMn4O5] cluster-binding site is contributed by Glu367. The chain crosses the membrane as a helical span at residues 447–471 (RARAAAAGFEKGIDRDLEPVLFMTP).

It belongs to the PsbB/PsbC family. PsbC subfamily. As to quaternary structure, PSII is composed of 1 copy each of membrane proteins PsbA, PsbB, PsbC, PsbD, PsbE, PsbF, PsbH, PsbI, PsbJ, PsbK, PsbL, PsbM, PsbT, PsbX, PsbY, PsbZ, Psb30/Ycf12, at least 3 peripheral proteins of the oxygen-evolving complex and a large number of cofactors. It forms dimeric complexes. Requires Binds multiple chlorophylls and provides some of the ligands for the Ca-4Mn-5O cluster of the oxygen-evolving complex. It may also provide a ligand for a Cl- that is required for oxygen evolution. PSII binds additional chlorophylls, carotenoids and specific lipids. as cofactor.

It is found in the plastid. The protein resides in the chloroplast thylakoid membrane. Functionally, one of the components of the core complex of photosystem II (PSII). It binds chlorophyll and helps catalyze the primary light-induced photochemical processes of PSII. PSII is a light-driven water:plastoquinone oxidoreductase, using light energy to abstract electrons from H(2)O, generating O(2) and a proton gradient subsequently used for ATP formation. The chain is Photosystem II CP43 reaction center protein from Carica papaya (Papaya).